Here is a 299-residue protein sequence, read N- to C-terminus: UDP-N-acetylenolpyruvoylglucosamine reductase (299 aa).

Residues 26-191 (GIGGPAKYFV…VSATFQLNAS (166 aa)) form the FAD-binding PCMH-type domain. The active site involves R170. C218 acts as the Proton donor in catalysis. E288 is an active-site residue.

Belongs to the MurB family. FAD serves as cofactor.

It localises to the cytoplasm. The enzyme catalyses UDP-N-acetyl-alpha-D-muramate + NADP(+) = UDP-N-acetyl-3-O-(1-carboxyvinyl)-alpha-D-glucosamine + NADPH + H(+). It participates in cell wall biogenesis; peptidoglycan biosynthesis. Functionally, cell wall formation. The polypeptide is UDP-N-acetylenolpyruvoylglucosamine reductase (Protochlamydia amoebophila (strain UWE25)).